The chain runs to 1036 residues: Isoleucine--tRNA ligase (1036 aa).

The 'HIGH' region motif lies at 46 to 56 (PFATGLPHYGH). The 'KMSKS' region motif lies at 589–593 (KMSKR). ATP is bound at residue Lys-592.

It belongs to the class-I aminoacyl-tRNA synthetase family. IleS type 2 subfamily. Monomer. Requires Zn(2+) as cofactor.

It is found in the cytoplasm. The enzyme catalyses tRNA(Ile) + L-isoleucine + ATP = L-isoleucyl-tRNA(Ile) + AMP + diphosphate. Its function is as follows. Catalyzes the attachment of isoleucine to tRNA(Ile). As IleRS can inadvertently accommodate and process structurally similar amino acids such as valine, to avoid such errors it has two additional distinct tRNA(Ile)-dependent editing activities. One activity is designated as 'pretransfer' editing and involves the hydrolysis of activated Val-AMP. The other activity is designated 'posttransfer' editing and involves deacylation of mischarged Val-tRNA(Ile). The polypeptide is Isoleucine--tRNA ligase (Chlamydia trachomatis serovar A (strain ATCC VR-571B / DSM 19440 / HAR-13)).